The following is a 33-amino-acid chain: Gastrin (33 aa).

Glutamine 1 is subject to Pyrrolidone carboxylic acid. Phenylalanine amide is present on phenylalanine 33.

It belongs to the gastrin/cholecystokinin family.

The protein resides in the secreted. Its function is as follows. Gastrin stimulates the stomach mucosa to produce and secrete hydrochloric acid and the pancreas to secrete its digestive enzymes. It also stimulates smooth muscle contraction and increases blood circulation and water secretion in the stomach and intestine. The sequence is that of Gastrin (GAST) from Cavia porcellus (Guinea pig).